We begin with the raw amino-acid sequence, 226 residues long: Cytochrome c-553I (226 aa).

Positions 1–22 (MTSKTTASLLAICVACAASAIA) are cleaved as a signal peptide. The tract at residues 43–68 (AAVSGDAHEQPAAEAPAEEEEETPAV) is disordered. Heme contacts are provided by Cys125, Cys128, His129, and Met173. Positions 203-226 (RGRPAKREDKSDEFVAQEDSCMSG) are disordered.

Binds 1 heme group per subunit.

Its subcellular location is the periplasm. The polypeptide is Cytochrome c-553I (cycB) (Paracoccus denitrificans).